Reading from the N-terminus, the 400-residue chain is Serine/threonine transporter SstT (400 aa).

8 helical membrane passes run 14–34, 48–68, 76–96, 136–156, 177–197, 211–231, 293–313, and 334–354; these read IIIA…VTPY, SVAP…FQVG, VLLL…IASL, AISE…GLAM, IIHK…AVTF, LLAV…PILV, LAGA…TLGI, and ASGV…LFGI.

Belongs to the dicarboxylate/amino acid:cation symporter (DAACS) (TC 2.A.23) family.

It localises to the cell inner membrane. It catalyses the reaction L-serine(in) + Na(+)(in) = L-serine(out) + Na(+)(out). The catalysed reaction is L-threonine(in) + Na(+)(in) = L-threonine(out) + Na(+)(out). Functionally, involved in the import of serine and threonine into the cell, with the concomitant import of sodium (symport system). The protein is Serine/threonine transporter SstT of Acinetobacter baumannii (strain SDF).